We begin with the raw amino-acid sequence, 159 residues long: Large ribosomal subunit protein uL23m (159 aa).

Belongs to the universal ribosomal protein uL23 family. Component of the mitochondrial ribosome large subunit (39S) which comprises a 16S rRNA and about 50 distinct proteins.

Its subcellular location is the mitochondrion. This chain is Large ribosomal subunit protein uL23m (mrpl-23), found in Caenorhabditis briggsae.